A 118-amino-acid chain; its full sequence is Vitelline membrane protein Vm32E (118 aa).

The signal sequence occupies residues M1 to A17. Residues G36 to T75 enclose the VM domain.

It belongs to the vitelline membrane family.

The protein resides in the secreted. Its function is as follows. Major early eggshell protein. The chain is Vitelline membrane protein Vm32E from Drosophila sechellia (Fruit fly).